A 130-amino-acid chain; its full sequence is Flagellar assembly factor FliW (130 aa).

The protein belongs to the FliW family. In terms of assembly, interacts with translational regulator CsrA and flagellin(s).

It is found in the cytoplasm. In terms of biological role, acts as an anti-CsrA protein, binds CsrA and prevents it from repressing translation of its target genes, one of which is flagellin. Binds to flagellin and participates in the assembly of the flagellum. The polypeptide is Flagellar assembly factor FliW (Borrelia turicatae (strain 91E135)).